Here is a 103-residue protein sequence, read N- to C-terminus: Large ribosomal subunit protein bL21 (103 aa).

It belongs to the bacterial ribosomal protein bL21 family. As to quaternary structure, part of the 50S ribosomal subunit. Contacts protein L20.

Functionally, this protein binds to 23S rRNA in the presence of protein L20. The polypeptide is Large ribosomal subunit protein bL21 (Acidovorax ebreus (strain TPSY) (Diaphorobacter sp. (strain TPSY))).